Here is a 382-residue protein sequence, read N- to C-terminus: MSKKQRCLMMESLPHEVVECILERLDADPLLRFKAVSKQWKSTIESPFFQRRQFTQRQQSGNPDVLMVSRCADINSEIEALTTLVLGSSSSVKIPTPWEEEEEEDKEYSVSQDSCDGLVCLFDKFKSGFVFNPATRWYHPLPLCQLQQLLIAIGDGFYDLGYRVSRLGFGKDKLTGTYKPVWLYNSIEIGLENATTCEVFDFSTNAWRYVSPAAPYRIVGCPAPVCVDGSLHWFTECEETKILSFDLHTETFQVVSKAPFANVDGFDIVMCNLDNRLCVSEMKLPNQVIWSFNSGNKTWHKMCSINLDITSRWFGPTQVCAVLPLALLDGKKKKKKKLLFYCRVRKRTMVVHDDETKSYDVAFEADSIGHPVCYFPSLISIS.

The 46-residue stretch at 7–52 (CLMMESLPHEVVECILERLDADPLLRFKAVSKQWKSTIESPFFQRR) folds into the F-box domain. The stretch at 78 to 101 (IEALTTLVLGSSSSVKIPTPWEEE) is one LRR 1 repeat. The Kelch 1 repeat unit spans residues 180–227 (PVWLYNSIEIGLENATTCEVFDFSTNAWRYVSPAAPYRIVGCPAPVCV). The stretch at 239–262 (ETKILSFDLHTETFQVVSKAPFAN) is one LRR 2 repeat. The stretch at 270–319 (MCNLDNRLCVSEMKLPNQVIWSFNSGNKTWHKMCSINLDITSRWFGPTQV) is one Kelch 2 repeat.

This is F-box/LRR-repeat/kelch-repeat protein At1g09650 from Arabidopsis thaliana (Mouse-ear cress).